We begin with the raw amino-acid sequence, 414 residues long: Ribulose bisphosphate carboxylase/oxygenase activase (414 aa).

37 to 44 (GRKGEGKT) provides a ligand contact to ATP. Positions 296 to 326 (RGYQTAPPPEAPVIQPVNNSSHKQKTSNTHL) are disordered. The span at 311–326 (PVNNSSHKQKTSNTHL) shows a compositional bias: polar residues.

Belongs to the RuBisCO activase family.

Its function is as follows. Activation of RuBisCO (ribulose-1,5-bisohosphate carboxylase/oxygenase; EC 4.1.1.39) involves the ATP-dependent carboxylation of the epsilon-amino group of lysine leading to a carbamate structure. The chain is Ribulose bisphosphate carboxylase/oxygenase activase (rca) from Nostoc sp. (strain PCC 7120 / SAG 25.82 / UTEX 2576).